Reading from the N-terminus, the 223-residue chain is Translation initiation factor 6 (223 aa).

This sequence belongs to the eIF-6 family.

Its function is as follows. Binds to the 50S ribosomal subunit and prevents its association with the 30S ribosomal subunit to form the 70S initiation complex. The chain is Translation initiation factor 6 from Saccharolobus islandicus (strain Y.N.15.51 / Yellowstone #2) (Sulfolobus islandicus).